A 649-amino-acid polypeptide reads, in one-letter code: Solute carrier family 22 member 17 (649 aa).

The segment at 1-70 (MAPRVATGTP…GGDGLGSSLS (70 aa)) is disordered. Polar residues predominate over residues 24–34 (VEITPTSNGQV). Residues 47–57 (QGEREREREGE) show a composition bias toward basic and acidic residues. N-linked (GlcNAc...) asparagine glycosylation is found at Asn134 and Asn143. The next 11 membrane-spanning stretches (helical) occupy residues 211–231 (VILEQILFILGFASGYLFLGY), 240–260 (GIVLLTLGLVGPCGVGGAAAG), 265–285 (VMALRFLLGFLLAGVDLGVYL), 300–320 (ALAGELVGVGGHFLFLGLALV), 330–350 (MITAPCILFLFYGWPGLFLES), 414–433 (NIWKNLLILGFTNFIAHAIR), 448–468 (FYLCSLLASGTAALACVFLGV), 477–497 (GILLLSMTLTGIASLVLLGLW), 526–546 (FSVLGLFSSQAAAILSTLLAA), 557–577 (GLGLIMALGALGGLSGPAQRL), and 584–604 (FLQHVVLAACALLCILSIMLL).

This sequence belongs to the major facilitator (TC 2.A.1) superfamily. Organic cation transporter (TC 2.A.1.19) family. Expressed in brain.

Its subcellular location is the cell membrane. It is found in the vacuole membrane. In terms of biological role, cell surface receptor for LCN2 (24p3) that plays a key role in iron homeostasis and transport. Able to bind iron-bound LCN2 (holo-24p3), followed by internalization of holo-24p3 and release of iron, thereby increasing intracellular iron concentration and leading to inhibition of apoptosis. Also binds iron-free LCN2 (apo-24p3), followed by internalization of apo-24p3 and its association with an intracellular siderophore, leading to iron chelation and iron transfer to the extracellular medium, thereby reducing intracellular iron concentration and resulting in apoptosis. This chain is Solute carrier family 22 member 17 (SLC22A17), found in Homo sapiens (Human).